The chain runs to 438 residues: Putative hydrolase MSMEG_3995/MSMEI_3903 (438 aa).

Residues Asp-95, Asp-104, Glu-143, and His-208 each coordinate Zn(2+). Lys-217 participates in a covalent cross-link: Isoglutamyl lysine isopeptide (Lys-Gln) (interchain with Q-Cter in protein Pup). His-400 provides a ligand contact to Zn(2+).

This sequence belongs to the peptidase M20 family. It depends on Zn(2+) as a cofactor.

The chain is Putative hydrolase MSMEG_3995/MSMEI_3903 from Mycolicibacterium smegmatis (strain ATCC 700084 / mc(2)155) (Mycobacterium smegmatis).